A 306-amino-acid chain; its full sequence is tRNA pseudouridine synthase B (306 aa).

D39 (nucleophile) is an active-site residue.

The protein belongs to the pseudouridine synthase TruB family. Type 1 subfamily.

It carries out the reaction uridine(55) in tRNA = pseudouridine(55) in tRNA. Responsible for synthesis of pseudouridine from uracil-55 in the psi GC loop of transfer RNAs. This Arthrobacter sp. (strain FB24) protein is tRNA pseudouridine synthase B.